A 445-amino-acid chain; its full sequence is WD repeat domain phosphoinositide-interacting protein 2 (445 aa).

The WD 1 repeat unit spans residues 182 to 222 (AHDSPLAALAFDASGTKLATASEKGTVIRVFSIPEGQKLFE). Positions 223–226 (FRRG) match the L/FRRG motif motif. WD repeat units lie at residues 228–267 (KRCV…EKPP) and 311–349 (GHKN…GGEC). Position 395 is a phosphoserine (Ser-395).

It belongs to the WD repeat PROPPIN family. In terms of assembly, interacts with TECPR1. Interacts with ATG16L1. Interacts with ATG5. Interacts with WIPI1. Interacts with WDR45. May interact with NUDC. Interacts with ULK1 and RB1CC1.

Its subcellular location is the preautophagosomal structure membrane. Component of the autophagy machinery that controls the major intracellular degradation process by which cytoplasmic materials are packaged into autophagosomes and delivered to lysosomes for degradation. Involved in an early step of the formation of preautophagosomal structures. Binds and is activated by phosphatidylinositol 3-phosphate (PtdIns3P) forming on membranes of the endoplasmic reticulum upon activation of the upstream ULK1 and PI3 kinases. Mediates ER-isolation membranes contacts by interacting with the ULK1:RB1CC1 complex and PtdIns3P. Once activated, WIPI2 recruits at phagophore assembly sites the ATG12-ATG5-ATG16L1 complex that directly controls the elongation of the nascent autophagosomal membrane. This is WD repeat domain phosphoinositide-interacting protein 2 from Mus musculus (Mouse).